The following is a 361-amino-acid chain: MVGKIAPIAVDAMGGDHAPGAIVQGAVNAARKGLPVVLVGPEARVREELARHRAASSLPLEVHPATEVVEMHDHPGQAMRRKKDNSIRVCFELVASGRAAGMVSAGNSGAVMAGAILVLGRPEGVERPAIVSVLPALKGAPLMLDMGAVVDCRPIHLVQFALMGEVYSRRVHGVARPRVAILSNGEEDTKGTDLTRAAAAALRRAPIDFVGYCEGRDLLTGEVDVIVTDGFTGNVALKTMEGTAKVVGEYLKRALRSTTVSKIGGLLSKAALEGMKKRIDWREVGGAPLVGVNGVGFISHGRSDALAVENAIRRAGDAARTHFIDEIARAVAPSHALLEVPADGAAAEQGPTPRRTAPRQT.

Residues 342–361 (ADGAAAEQGPTPRRTAPRQT) are disordered.

It belongs to the PlsX family. As to quaternary structure, homodimer. Probably interacts with PlsY.

The protein localises to the cytoplasm. It carries out the reaction a fatty acyl-[ACP] + phosphate = an acyl phosphate + holo-[ACP]. It functions in the pathway lipid metabolism; phospholipid metabolism. Functionally, catalyzes the reversible formation of acyl-phosphate (acyl-PO(4)) from acyl-[acyl-carrier-protein] (acyl-ACP). This enzyme utilizes acyl-ACP as fatty acyl donor, but not acyl-CoA. The polypeptide is Phosphate acyltransferase (Anaeromyxobacter sp. (strain K)).